The chain runs to 276 residues: Dermonecrotic toxin LafSicTox-betaIE2 (276 aa).

Histidine 5 is an active-site residue. Residues glutamate 25 and aspartate 27 each contribute to the Mg(2+) site. Histidine 41 serves as the catalytic Nucleophile. Intrachain disulfides connect cysteine 45-cysteine 51 and cysteine 47-cysteine 189. Residue aspartate 85 coordinates Mg(2+).

The protein belongs to the arthropod phospholipase D family. Class II subfamily. It depends on Mg(2+) as a cofactor. Expressed by the venom gland.

It localises to the secreted. The catalysed reaction is an N-(acyl)-sphingosylphosphocholine = an N-(acyl)-sphingosyl-1,3-cyclic phosphate + choline. The enzyme catalyses an N-(acyl)-sphingosylphosphoethanolamine = an N-(acyl)-sphingosyl-1,3-cyclic phosphate + ethanolamine. It catalyses the reaction a 1-acyl-sn-glycero-3-phosphocholine = a 1-acyl-sn-glycero-2,3-cyclic phosphate + choline. It carries out the reaction a 1-acyl-sn-glycero-3-phosphoethanolamine = a 1-acyl-sn-glycero-2,3-cyclic phosphate + ethanolamine. Dermonecrotic toxins cleave the phosphodiester linkage between the phosphate and headgroup of certain phospholipids (sphingolipid and lysolipid substrates), forming an alcohol (often choline) and a cyclic phosphate. This toxin acts on sphingomyelin (SM). It may also act on ceramide phosphoethanolamine (CPE), lysophosphatidylcholine (LPC) and lysophosphatidylethanolamine (LPE), but not on lysophosphatidylserine (LPS), and lysophosphatidylglycerol (LPG). It acts by transphosphatidylation, releasing exclusively cyclic phosphate products as second products. Induces dermonecrosis, hemolysis, increased vascular permeability, edema, inflammatory response, and platelet aggregation. In Loxosceles aff. spinulosa (strain GJB-2008) (Recluse spider), this protein is Dermonecrotic toxin LafSicTox-betaIE2.